Consider the following 493-residue polypeptide: MQISIIQKGLEGWRGSILVFGLLEGALESQLNALKEICTPASLAKALQDKEFVGKQGDLQSFQLIGKEPREIVLIGLGSAEKLVLDDLRKATAISCRKVIGQEGTLGILLPWDIFDSDIAAKAVGEAVILSFFKDNRFQKDPKQKKLPNKLELLGLPESSQKYLSEIVPICSGVKLARELVGAPPNSLTPSALANQAKEIANQFGLEAKILGQEECQAKNMGAFLAVSQGSDLSPKFIHLTYRAKGEIKRRIAMVGKGLTFDSGGYNLKVGASQIEMMKYDMGGSAAVIGAARAIGELAPSGVEIHFLVATCENMINGSAVHPGDIVKASNGTTIEINNTDAEGRLTLADALTYACELKPDAIVDLATLTGACVIALGEELAGLWTNSKHLSKELKESAEACGEGLWEMPLQDSYKEGLKSMLADIKNTGPRAGGSITAALFLKEFIKEDIAWAHIDIAGTCWTDKDRGINPAGATGFGVRTLVNWASRSINP.

Residues lysine 257 and aspartate 262 each coordinate Mn(2+). The active site involves lysine 269. Mn(2+)-binding residues include aspartate 281, aspartate 341, and glutamate 343. The active site involves arginine 345.

The protein belongs to the peptidase M17 family. Mn(2+) serves as cofactor.

The protein resides in the cytoplasm. The catalysed reaction is Release of an N-terminal amino acid, Xaa-|-Yaa-, in which Xaa is preferably Leu, but may be other amino acids including Pro although not Arg or Lys, and Yaa may be Pro. Amino acid amides and methyl esters are also readily hydrolyzed, but rates on arylamides are exceedingly low.. It carries out the reaction Release of an N-terminal amino acid, preferentially leucine, but not glutamic or aspartic acids.. Its function is as follows. Presumably involved in the processing and regular turnover of intracellular proteins. Catalyzes the removal of unsubstituted N-terminal amino acids from various peptides. The sequence is that of Probable cytosol aminopeptidase from Prochlorococcus marinus (strain MIT 9211).